The chain runs to 252 residues: Phosphate import ATP-binding protein PstB (252 aa).

In terms of domain architecture, ABC transporter spans 5 to 247 (VKIDKLNVHF…PEKKQTEDYI (243 aa)). An ATP-binding site is contributed by 37 to 44 (GPSGCGKS).

It belongs to the ABC transporter superfamily. Phosphate importer (TC 3.A.1.7) family. As to quaternary structure, the complex is composed of two ATP-binding proteins (PstB), two transmembrane proteins (PstC and PstA) and a solute-binding protein (PstS).

Its subcellular location is the cell inner membrane. It catalyses the reaction phosphate(out) + ATP + H2O = ADP + 2 phosphate(in) + H(+). In terms of biological role, part of the ABC transporter complex PstSACB involved in phosphate import. Responsible for energy coupling to the transport system. The protein is Phosphate import ATP-binding protein PstB of Geobacter metallireducens (strain ATCC 53774 / DSM 7210 / GS-15).